Here is a 185-residue protein sequence, read N- to C-terminus: MSEEKQTPEQEAEVEAQEEAVQADTEEVTQDEQSAFQEKIDELQQLLDEKENKILRVQADFENYKRRARTEVETVQKYRSQHVVSDLLPALDNFERALGIDPDNEQAKSLLEGMQMVYRQLVEALKNEGVEPIEAVGKEFDPNLHQAVMQVEDENFDSNIVVEELQKGYKLKDRVIRPSMVKVNQ.

The interval 1-37 is disordered; it reads MSEEKQTPEQEAEVEAQEEAVQADTEEVTQDEQSAFQ.

Belongs to the GrpE family. As to quaternary structure, homodimer.

It localises to the cytoplasm. In terms of biological role, participates actively in the response to hyperosmotic and heat shock by preventing the aggregation of stress-denatured proteins, in association with DnaK and GrpE. It is the nucleotide exchange factor for DnaK and may function as a thermosensor. Unfolded proteins bind initially to DnaJ; upon interaction with the DnaJ-bound protein, DnaK hydrolyzes its bound ATP, resulting in the formation of a stable complex. GrpE releases ADP from DnaK; ATP binding to DnaK triggers the release of the substrate protein, thus completing the reaction cycle. Several rounds of ATP-dependent interactions between DnaJ, DnaK and GrpE are required for fully efficient folding. The protein is Protein GrpE of Bacillus pumilus (strain SAFR-032).